The following is a 169-amino-acid chain: Phosphopantetheine adenylyltransferase (169 aa).

Residue threonine 13 coordinates substrate. ATP contacts are provided by residues 13-14 (TF) and histidine 21. Residues lysine 45, leucine 82, and arginine 96 each contribute to the substrate site. ATP contacts are provided by residues 97–99 (GLR), glutamate 107, and 132–138 (HQFISSR).

The protein belongs to the bacterial CoaD family. As to quaternary structure, homohexamer. Requires Mg(2+) as cofactor.

The protein resides in the cytoplasm. It catalyses the reaction (R)-4'-phosphopantetheine + ATP + H(+) = 3'-dephospho-CoA + diphosphate. It participates in cofactor biosynthesis; coenzyme A biosynthesis; CoA from (R)-pantothenate: step 4/5. Reversibly transfers an adenylyl group from ATP to 4'-phosphopantetheine, yielding dephospho-CoA (dPCoA) and pyrophosphate. The chain is Phosphopantetheine adenylyltransferase from Acidiphilium cryptum (strain JF-5).